The chain runs to 369 residues: S-adenosylmethionine decarboxylase proenzyme 2 (369 aa).

Residues Glu-9 and Glu-12 contribute to the active site. Ser-69 functions as the Schiff-base intermediate with substrate; via pyruvic acid in the catalytic mechanism. Pyruvic acid (Ser); by autocatalysis is present on Ser-69. Cys-83 serves as the catalytic Proton donor; for catalytic activity. Active-site proton acceptor; for processing activity residues include Ser-236 and His-249.

It belongs to the eukaryotic AdoMetDC family. It depends on pyruvate as a cofactor. Is synthesized initially as an inactive proenzyme. Formation of the active enzyme involves a self-maturation process in which the active site pyruvoyl group is generated from an internal serine residue via an autocatalytic post-translational modification. Two non-identical subunits are generated from the proenzyme in this reaction, and the pyruvate is formed at the N-terminus of the alpha chain, which is derived from the carboxyl end of the proenzyme. The post-translation cleavage follows an unusual pathway, termed non-hydrolytic serinolysis, in which the side chain hydroxyl group of the serine supplies its oxygen atom to form the C-terminus of the beta chain, while the remainder of the serine residue undergoes an oxidative deamination to produce ammonia and the pyruvoyl group blocking the N-terminus of the alpha chain.

It carries out the reaction S-adenosyl-L-methionine + H(+) = S-adenosyl 3-(methylsulfanyl)propylamine + CO2. The protein operates within amine and polyamine biosynthesis; S-adenosylmethioninamine biosynthesis; S-adenosylmethioninamine from S-adenosyl-L-methionine: step 1/1. In Brassica juncea (Indian mustard), this protein is S-adenosylmethionine decarboxylase proenzyme 2 (SAMDC2).